A 345-amino-acid polypeptide reads, in one-letter code: Fe(3+) ions import ATP-binding protein FbpC (345 aa).

Residues 3-233 form the ABC transporter domain; that stretch reads LSLKAATVRF…PADEFVARFL (231 aa). 35–42 provides a ligand contact to ATP; it reads GPSGSGKS.

It belongs to the ABC transporter superfamily. Fe(3+) ion importer (TC 3.A.1.10) family. The complex is composed of two ATP-binding proteins (FbpC), two transmembrane proteins (FbpB) and a solute-binding protein (FbpA).

It is found in the cell membrane. The enzyme catalyses Fe(3+)(out) + ATP + H2O = Fe(3+)(in) + ADP + phosphate + H(+). In terms of biological role, part of the ABC transporter complex FbpABC involved in Fe(3+) ions import. Responsible for energy coupling to the transport system. The polypeptide is Fe(3+) ions import ATP-binding protein FbpC (Streptomyces avermitilis (strain ATCC 31267 / DSM 46492 / JCM 5070 / NBRC 14893 / NCIMB 12804 / NRRL 8165 / MA-4680)).